A 1331-amino-acid chain; its full sequence is ABC multidrug transporter MDR2 (1331 aa).

Composition is skewed to basic and acidic residues over residues 1–20 (MVEV…KQEN) and 31–41 (SDKEKVAKKGN). The disordered stretch occupies residues 1–51 (MVEVSEKPNTQDDGVSKQENRNPASSSSSTSDKEKVAKKGNSDATKSSTPE). A run of 4 helical transmembrane segments spans residues 93-113 (MIFL…LPLF), 147-167 (YFVY…VGFI), 219-239 (KVGL…IGYV), and 242-262 (WKLA…MGGI). An ABC transmembrane type-1 1 domain is found at 97 to 387 (AIVSLASIAA…VAPNTQAFAS (291 aa)). N-linked (GlcNAc...) asparagine glycosylation is present at asparagine 293. 2 helical membrane-spanning segments follow: residues 325-345 (LGIM…LGFW) and 358-378 (LSAI…IGNV). The ABC transporter 1 domain occupies 422-667 (IEFRGIKHIY…KGTYLQLVEA (246 aa)). 457-464 (GPSGSGKS) is a binding site for ATP. Asparagine 529 and asparagine 737 each carry an N-linked (GlcNAc...) asparagine glycan. Transmembrane regions (helical) follow at residues 762 to 782 (LCGF…SVFF) and 810 to 830 (FLML…IFAI). One can recognise an ABC transmembrane type-1 2 domain in the interval 764–1051 (GFFFAVLSGA…VFSFSPDMGK (288 aa)). N-linked (GlcNAc...) asparagine glycosylation is present at asparagine 860. 4 helical membrane passes run 884–904 (LGTI…ALAF), 910–930 (LVCI…FWIL), 995–1015 (ASQS…GGLL), and 1025–1045 (FFLC…VFSF). Residues 1086–1324 (IEFRDVHFRY…KGRYYELVHM (239 aa)) form the ABC transporter 2 domain. N-linked (GlcNAc...) asparagine glycosylation is present at asparagine 1108. Position 1121–1128 (1121–1128 (GPSGCGKS)) interacts with ATP.

It belongs to the ABC transporter superfamily. ABCB family. Multidrug resistance exporter (TC 3.A.1.201) subfamily.

The protein localises to the cell membrane. It catalyses the reaction itraconazole(in) + ATP + H2O = itraconazole(out) + ADP + phosphate + H(+). Its function is as follows. Pleiotropic ABC efflux transporter that may be involved in the modulation susceptibility to a wide range of unrelated cytotoxic compounds. The sequence is that of ABC multidrug transporter MDR2 from Trichophyton equinum (strain ATCC MYA-4606 / CBS 127.97) (Horse ringworm fungus).